Here is a 117-residue protein sequence, read N- to C-terminus: uncharacterized protein (117 aa).

A coiled-coil region spans residues 5-50; sequence DKIHNTNEQITALEKKKYQIETTLLEKQRDLLKLETQQNKAKLELL.

This is an uncharacterized protein from Bacillus pumilus (Bacillus mesentericus).